The chain runs to 1417 residues: DNA-directed RNA polymerase subunit beta' (1417 aa).

Zn(2+) contacts are provided by Cys-68, Cys-70, Cys-83, and Cys-86. Residues Asp-458, Asp-460, and Asp-462 each coordinate Mg(2+). Residues Cys-811, Cys-884, Cys-891, and Cys-894 each coordinate Zn(2+).

The protein belongs to the RNA polymerase beta' chain family. As to quaternary structure, the RNAP catalytic core consists of 2 alpha, 1 beta, 1 beta' and 1 omega subunit. When a sigma factor is associated with the core the holoenzyme is formed, which can initiate transcription. Requires Mg(2+) as cofactor. Zn(2+) serves as cofactor.

The catalysed reaction is RNA(n) + a ribonucleoside 5'-triphosphate = RNA(n+1) + diphosphate. Functionally, DNA-dependent RNA polymerase catalyzes the transcription of DNA into RNA using the four ribonucleoside triphosphates as substrates. In Francisella tularensis subsp. mediasiatica (strain FSC147), this protein is DNA-directed RNA polymerase subunit beta'.